Consider the following 272-residue polypeptide: Thiazole synthase (272 aa).

The active-site Schiff-base intermediate with DXP is the lysine 111. Residues glycine 172, 198–199 (AG), and 220–221 (NS) contribute to the 1-deoxy-D-xylulose 5-phosphate site. The segment at 249–272 (SGRLPRRDQASASSPTTGLVQSPQ) is disordered. A compositionally biased stretch (polar residues) spans 258 to 272 (ASASSPTTGLVQSPQ).

It belongs to the ThiG family. Homotetramer. Forms heterodimers with either ThiH or ThiS.

Its subcellular location is the cytoplasm. It carries out the reaction [ThiS sulfur-carrier protein]-C-terminal-Gly-aminoethanethioate + 2-iminoacetate + 1-deoxy-D-xylulose 5-phosphate = [ThiS sulfur-carrier protein]-C-terminal Gly-Gly + 2-[(2R,5Z)-2-carboxy-4-methylthiazol-5(2H)-ylidene]ethyl phosphate + 2 H2O + H(+). Its pathway is cofactor biosynthesis; thiamine diphosphate biosynthesis. In terms of biological role, catalyzes the rearrangement of 1-deoxy-D-xylulose 5-phosphate (DXP) to produce the thiazole phosphate moiety of thiamine. Sulfur is provided by the thiocarboxylate moiety of the carrier protein ThiS. In vitro, sulfur can be provided by H(2)S. The protein is Thiazole synthase of Synechococcus sp. (strain CC9605).